We begin with the raw amino-acid sequence, 179 residues long: Repressor of phase 1 flagellin gene (179 aa).

In terms of biological role, transcriptional repressor of the FliC phase-1 flagellin. This is Repressor of phase 1 flagellin gene (fljA) from Salmonella abony.